The chain runs to 344 residues: Fructose-1,6-bisphosphatase class 1 (344 aa).

The Mg(2+) site is built by E91, D110, L112, and D113. Substrate-binding positions include 113–116 and N200; that span reads DGSS. E272 is a Mg(2+) binding site.

This sequence belongs to the FBPase class 1 family. Homotetramer. Mg(2+) is required as a cofactor.

It is found in the cytoplasm. The catalysed reaction is beta-D-fructose 1,6-bisphosphate + H2O = beta-D-fructose 6-phosphate + phosphate. It participates in carbohydrate biosynthesis; Calvin cycle. The protein is Fructose-1,6-bisphosphatase class 1 of Rhodopseudomonas palustris (strain BisA53).